Reading from the N-terminus, the 152-residue chain is MNTPMSLSAARGRMLPFLEKEKSEEESETLESSLLQLIDDNRRSSLQLREKTERSRKEAIRHAARTADLLVKAVNGGVEECFVNEKRIESEIRNLAITVAKFGKQTDQWLAVTHAVNSAVKEIGDFENWMKTMEFDCKKITAAIRNIHEDQQ.

This sequence belongs to the BLOC1S1 family. As to quaternary structure, component of the biogenesis of lysosome-related organelles complex-1 (BLOC-1). Interacts with BLOS2 and SNX1. In terms of tissue distribution, expressed in the whole plant (at protein level).

The protein resides in the cytoplasm. The protein localises to the endosome. Its function is as follows. Component of the biogenesis of lysosome-related organelles complex-1 (BLOC-1), a complex that mediates the vacuolar degradative transport via the intracellular vesicle trafficking from the endosome to the vacuole. Probably regulates the PIN1 and PIN2 homeostasis through its interaction with SNX1. The chain is Biogenesis of lysosome-related organelles complex 1 subunit 1 (BLOS1) from Arabidopsis thaliana (Mouse-ear cress).